A 192-amino-acid chain; its full sequence is Large ribosomal subunit protein bL9 (192 aa).

Positions 172–192 (DALRPEDFFDPEADGVDEDEA) are disordered. The segment covering 179 to 192 (FFDPEADGVDEDEA) has biased composition (acidic residues).

It belongs to the bacterial ribosomal protein bL9 family.

Its function is as follows. Binds to the 23S rRNA. This chain is Large ribosomal subunit protein bL9, found in Rhizobium johnstonii (strain DSM 114642 / LMG 32736 / 3841) (Rhizobium leguminosarum bv. viciae).